We begin with the raw amino-acid sequence, 986 residues long: Vacuolar membrane protease (986 aa).

Residues 1–20 (MATPRAQKFNPIAFTPGPVT) are Cytoplasmic-facing. Residues 21 to 41 (LITTIVYLALLIPILVISLVV) form a helical membrane-spanning segment. At 42 to 392 (PPAPETSPEG…AFAVFRLHTL (351 aa)) the chain is on the vacuolar side. Residues Asn-53, Asn-116, and Asn-119 are each glycosylated (N-linked (GlcNAc...) asparagine). Zn(2+)-binding residues include His-175 and Asp-187. Glu-221 acts as the Proton acceptor in catalysis. Glu-222 is a binding site for Zn(2+). N-linked (GlcNAc...) asparagine glycosylation occurs at Asn-238. Positions 247 and 320 each coordinate Zn(2+). A helical transmembrane segment spans residues 393 to 413 (FALSVTLLIVAPLVIFITAIV). Residues 414-447 (LSKTDRMYLFSMSKSLGGTDERVSLRGLRGLFRT) are Cytoplasmic-facing. A helical transmembrane segment spans residues 448-468 (PIILAVATVIPIGLAYLLEKV). Residues 469 to 477 (NPYIVHSSQ) are Vacuolar-facing. Residues 478 to 498 (FSVWSMMISVWIFLAWFLACA) traverse the membrane as a helical segment. The Cytoplasmic portion of the chain corresponds to 499–509 (ADFFRPSALHR). A helical transmembrane segment spans residues 510–530 (AYSYTWIFIATWVMLVINTVY). Over 531-534 (ANQK) the chain is Vacuolar. The helical transmembrane segment at 535–555 (GIAAGYFVFFYFSGSFLATWV) threads the bilayer. Topologically, residues 556 to 665 (SYLELFALPR…WSWTLPRWTW (110 aa)) are cytoplasmic. The disordered stretch occupies residues 595–620 (ELPSDTGPHAEYPGDADETDPTESTS). A helical membrane pass occupies residues 666-686 (VLQLLLLAPIVLILVGQLALF). Residues 687–702 (LTTSMSQVGSDGVSTF) are Vacuolar-facing. A helical membrane pass occupies residues 703–723 (IVYLACAVFTTLLFAPLFPFI). Residues 724 to 729 (HRFTYH) lie on the Cytoplasmic side of the membrane. A helical membrane pass occupies residues 730–750 (IPTFLFLVFVGTLIYNLVAFP). Over 751–986 (FSPANRLKMF…VEASHGITIQ (236 aa)) the chain is Vacuolar. 3 N-linked (GlcNAc...) asparagine glycosylation sites follow: Asn-797, Asn-840, and Asn-948.

The protein belongs to the peptidase M28 family. The cofactor is Zn(2+).

The protein resides in the vacuole membrane. In terms of biological role, may be involved in vacuolar sorting and osmoregulation. The protein is Vacuolar membrane protease of Blastomyces gilchristii (strain SLH14081) (Blastomyces dermatitidis).